Consider the following 282-residue polypeptide: HTH-type transcriptional activator RhaR (282 aa).

The region spanning 179–277 (DKLITALANS…GMTPSQWRHL (99 aa)) is the HTH araC/xylS-type domain. DNA-binding regions (H-T-H motif) lie at residues 196 to 217 (DAFCQQEQCSERVLRQQFRAQT) and 244 to 267 (ISEISMQCGFEDSNYFSVVFTRET).

In terms of assembly, binds DNA as a dimer.

It is found in the cytoplasm. Activates expression of the rhaSR operon in response to L-rhamnose. The sequence is that of HTH-type transcriptional activator RhaR from Salmonella agona (strain SL483).